A 188-amino-acid chain; its full sequence is Insulin-like growth factor 1 (188 aa).

The b stretch occupies residues 45–73 (GPETLCGAELVDTLQFVCGERGFYFSKPT). 3 cysteine pairs are disulfide-bonded: cysteine 50-cysteine 92, cysteine 62-cysteine 105, and cysteine 91-cysteine 96. Residues 74 to 85 (GYGPSSRRSHNR) are c. Residues 86-106 (GIVDECCFQSCELRRLEMYCA) are a. The tract at residues 107-114 (PVKSGKAA) is d. Positions 115–188 (RSVRAQRHTD…GNTGGRNYRM (74 aa)) are cleaved as a propeptide — e peptide. The interval 115–188 (RSVRAQRHTD…GNTGGRNYRM (74 aa)) is disordered. Positions 140 to 153 (RGTERRTAQHPDKT) are enriched in basic and acidic residues.

It belongs to the insulin family. In terms of tissue distribution, all the isoforms are expressed in embryos, juvenile and adult liver, muscle and brain. At least one isoform is expressed in heart, kidney, testes, ovary, adipose tissue and spleen of juvenile salmon.

It is found in the secreted. Its function is as follows. The insulin-like growth factors, isolated from plasma, are structurally and functionally related to insulin but have a much higher growth-promoting activity. Acts as a ligand for IGF1R. Binds to the alpha subunit of IGF1R, leading to the activation of the intrinsic tyrosine kinase activity which autophosphorylates tyrosine residues in the beta subunit thus initiatiating a cascade of down-stream signaling events leading to activation of the PI3K-AKT/PKB and the Ras-MAPK pathways. Binds to integrins. Its binding to integrins and subsequent ternary complex formation with integrins and IGFR1 are essential for IGF1 signaling. This chain is Insulin-like growth factor 1, found in Oncorhynchus kisutch (Coho salmon).